A 101-amino-acid polypeptide reads, in one-letter code: MSVSAAVDQYTVLTGDRSKIKDLLCSRLTECGWRDEVRLMCRNILLEKGTNNSFTVEQLITEVTPKARTLVPDAVKKELLMKIRTILTENEEEADEAEEEP.

It belongs to the ENY2 family. In terms of assembly, component of the nuclear pore complex (NPC)-associated AMEX complex (anchoring and mRNA export complex), composed of at least e(y)2 and xmas-2. Component of the SAGA transcription coactivator-HAT complexes, at least composed of Ada2b, e(y)2, Pcaf/Gcn5, Taf10 and Nipped-A/Trrap. Within the SAGA complex, e(y)2, Sgf11, and not/nonstop form an additional subcomplex of SAGA called the DUB module (deubiquitination module). Component of the THO complex, composed of at least e(y)2, HPR1, THO2, THOC5, THOC6 and THOC7. Interacts with e(y)1. Interacts with su(Hw) (via zinc fingers). Interacts with xmas-2; required for localization to the nuclear periphery. Interacts with the nuclear pore complex (NPC).

It is found in the nucleus. The protein resides in the nucleoplasm. It localises to the cytoplasm. Involved in mRNA export coupled transcription activation by association with both the AMEX and the SAGA complexes. The SAGA complex is a multiprotein complex that activates transcription by remodeling chromatin and mediating histone acetylation and deubiquitination. Within the SAGA complex, participates in a subcomplex that specifically deubiquitinates histone H2B. The SAGA complex is recruited to specific gene promoters by activators, where it is required for transcription. Required for nuclear receptor-mediated transactivation. Involved in transcription elongation by recruiting the THO complex onto nascent mRNA. The AMEX complex functions in docking export-competent ribonucleoprotein particles (mRNPs) to the nuclear entrance of the nuclear pore complex (nuclear basket). AMEX participates in mRNA export and accurate chromatin positioning in the nucleus by tethering genes to the nuclear periphery. In Drosophila yakuba (Fruit fly), this protein is Enhancer of yellow 2 transcription factor.